Here is a 345-residue protein sequence, read N- to C-terminus: Biotin synthase (345 aa).

A Radical SAM core domain is found at 38 to 256 (RQVQVSTLLS…IAVARIMMPA (219 aa)). [4Fe-4S] cluster contacts are provided by cysteine 53, cysteine 57, and cysteine 60. Cysteine 97, cysteine 128, cysteine 188, and arginine 260 together coordinate [2Fe-2S] cluster.

Belongs to the radical SAM superfamily. Biotin synthase family. As to quaternary structure, homodimer. The cofactor is [4Fe-4S] cluster. It depends on [2Fe-2S] cluster as a cofactor.

The catalysed reaction is (4R,5S)-dethiobiotin + (sulfur carrier)-SH + 2 reduced [2Fe-2S]-[ferredoxin] + 2 S-adenosyl-L-methionine = (sulfur carrier)-H + biotin + 2 5'-deoxyadenosine + 2 L-methionine + 2 oxidized [2Fe-2S]-[ferredoxin]. It functions in the pathway cofactor biosynthesis; biotin biosynthesis; biotin from 7,8-diaminononanoate: step 2/2. Catalyzes the conversion of dethiobiotin (DTB) to biotin by the insertion of a sulfur atom into dethiobiotin via a radical-based mechanism. This is Biotin synthase from Pectobacterium atrosepticum (strain SCRI 1043 / ATCC BAA-672) (Erwinia carotovora subsp. atroseptica).